Reading from the N-terminus, the 933-residue chain is Collagen alpha-2(I) chain (933 aa).

A compositionally biased stretch (gly residues) spans 1–16; that stretch reads SGGFDFGVGLGPGPMG. Disordered regions lie at residues 1 to 191 and 206 to 933; these read SGGF…LTGA and LPGP…AGVR. The segment covering 17–53 has biased composition (low complexity); that stretch reads LMGPRGPPGASGAPGPQGFQGPAGEPGEPGQTGPAGA. 2 positions are modified to 4-hydroxyproline: Pro-24 and Pro-30. Residues 57-72 are compositionally biased toward basic and acidic residues; the sequence is KAGEDGHPGKPGRPGE. Lys-94 carries the post-translational modification 5-hydroxylysine; alternate. Lys-94 carries an O-linked (Gal...) hydroxylysine; alternate glycan. Low complexity-rich tracts occupy residues 108–137, 162–176, and 213–228; these read VGAP…SAGP, AGPR…VSGP, and PGPV…RGLV. Positions 280–289 are enriched in gly residues; it reads GLRGGPGSRG. 4-hydroxyproline occurs at positions 317 and 320. Over residues 413 to 422 the composition is skewed to gly residues; it reads GVQGGKGEQG. 2 stretches are compositionally biased toward low complexity: residues 468–485 and 497–507; these read PGES…SRGP and EPGVVGAPGTA. The span at 508–517 shows a compositional bias: gly residues; it reads GPAGSGGLPG. Composition is skewed to low complexity over residues 540-584, 591-611, and 627-640; these read VGTT…PRGS, VGPA…QPGA, and PTGP…SGPN. Positions 644–656 are enriched in gly residues; it reads GPAGGRGDGGPPG. Residues 657–667 are compositionally biased toward low complexity; sequence LTGFPGAAGRT. Residues 704 to 713 are compositionally biased toward gly residues; sequence GETGAGGPPG. Composition is skewed to low complexity over residues 721–748 and 756–781; these read SGEP…LGLP and LPGV…RGPS. Basic and acidic residues predominate over residues 795–807; the sequence is AGRDGLPGHKGER. Low complexity-rich tracts occupy residues 809–831 and 840–860; these read YAGN…VGPA and PGPA…PSGP. The span at 864-874 shows a compositional bias: basic and acidic residues; the sequence is RGDKGEGDKGP.

This sequence belongs to the fibrillar collagen family. Trimers of one alpha 2(I) and two alpha 1(I) chains. Interacts (via C-terminus) with TMEM131 (via PapD-L domain); the interaction is direct and is involved in assembly and TRAPPIII ER-to-Golgi transport complex-dependent secretion of collagen. In terms of processing, prolines at the third position of the tripeptide repeating unit (G-X-Y) are hydroxylated in some or all of the chains. As to expression, expressed in bones.

It is found in the secreted. It localises to the extracellular space. Its subcellular location is the extracellular matrix. Functionally, type I collagen is a member of group I collagen (fibrillar forming collagen). In Glyptodon sp. (strain SLP-2019) (Giant armadillo), this protein is Collagen alpha-2(I) chain.